Reading from the N-terminus, the 432-residue chain is Adenylosuccinate synthetase (432 aa).

Residues glycine 13–lysine 19 and glycine 41–threonine 43 each bind GTP. Residue aspartate 14 is the Proton acceptor of the active site. Aspartate 14 and glycine 41 together coordinate Mg(2+). IMP contacts are provided by residues aspartate 14–lysine 17, asparagine 39–histidine 42, threonine 130, arginine 144, glutamine 225, threonine 240, and arginine 304. Histidine 42 (proton donor) is an active-site residue. Alanine 300–arginine 306 contacts substrate. GTP contacts are provided by residues arginine 306, lysine 332 to aspartate 334, and serine 415 to glycine 417.

The protein belongs to the adenylosuccinate synthetase family. As to quaternary structure, homodimer. Mg(2+) serves as cofactor.

The protein localises to the cytoplasm. It catalyses the reaction IMP + L-aspartate + GTP = N(6)-(1,2-dicarboxyethyl)-AMP + GDP + phosphate + 2 H(+). The protein operates within purine metabolism; AMP biosynthesis via de novo pathway; AMP from IMP: step 1/2. In terms of biological role, plays an important role in the de novo pathway of purine nucleotide biosynthesis. Catalyzes the first committed step in the biosynthesis of AMP from IMP. The protein is Adenylosuccinate synthetase of Proteus mirabilis (strain HI4320).